A 304-amino-acid chain; its full sequence is Putative S-adenosyl-L-methionine-dependent methyltransferase MAV_4444 (304 aa).

S-adenosyl-L-methionine is bound by residues aspartate 130 and aspartate 159–leucine 160.

The protein belongs to the UPF0677 family.

Its function is as follows. Exhibits S-adenosyl-L-methionine-dependent methyltransferase activity. The polypeptide is Putative S-adenosyl-L-methionine-dependent methyltransferase MAV_4444 (Mycobacterium avium (strain 104)).